Consider the following 763-residue polypeptide: C6 finger domain transcription factor hasF (763 aa).

The segment covering 1–20 (MDSTTSSSRFSVSSPQSGPS) has biased composition (low complexity). A disordered region spans residues 1–25 (MDSTTSSSRFSVSSPQSGPSAGIQK). Residues 34 to 61 (CLTCRRRKVKCDHAQPVCTPCQRGGRVC) constitute a DNA-binding region (zn(2)-C6 fungal-type). Disordered regions lie at residues 68–91 (PVSQ…RSGQ), 112–145 (GGNM…PKCE), and 189–219 (DQSS…ESLT). Residues 80-89 (SRVSRTNLRS) show a composition bias toward polar residues. The span at 197–209 (DSPPSDQPTPPFP) shows a compositional bias: pro residues.

It is found in the nucleus. In terms of biological role, transcription factor; part of the gene cluster that mediates the biosynthesis of hexadehydro-astechrome (HAS), a tryptophan-derived iron(III)-complex that acts as a virulence factor in infected mice. Does not regulate the expression of the HAS biosynthetic genes (at least under the growth conditions tested). This Aspergillus fumigatus (strain CBS 144.89 / FGSC A1163 / CEA10) (Neosartorya fumigata) protein is C6 finger domain transcription factor hasF.